Consider the following 180-residue polypeptide: ATP-dependent Clp protease proteolytic subunit 2 (180 aa).

The Nucleophile role is filled by Ser86. Residue His111 is part of the active site.

The protein belongs to the peptidase S14 family. Fourteen ClpP subunits assemble into 2 heptameric rings which stack back to back to give a disk-like structure with a central cavity, resembling the structure of eukaryotic proteasomes.

The protein resides in the cytoplasm. The enzyme catalyses Hydrolysis of proteins to small peptides in the presence of ATP and magnesium. alpha-casein is the usual test substrate. In the absence of ATP, only oligopeptides shorter than five residues are hydrolyzed (such as succinyl-Leu-Tyr-|-NHMec, and Leu-Tyr-Leu-|-Tyr-Trp, in which cleavage of the -Tyr-|-Leu- and -Tyr-|-Trp bonds also occurs).. Cleaves peptides in various proteins in a process that requires ATP hydrolysis. Has a chymotrypsin-like activity. Plays a major role in the degradation of misfolded proteins. This Tropheryma whipplei (strain Twist) (Whipple's bacillus) protein is ATP-dependent Clp protease proteolytic subunit 2.